We begin with the raw amino-acid sequence, 411 residues long: Carbohydrate sulfotransferase 1 (411 aa).

Residues 1–2 (MQ) lie on the Cytoplasmic side of the membrane. Residues 3–23 (CSWKAVLLLALASIAIQYTAI) form a helical; Signal-anchor for type II membrane protein membrane-spanning segment. Residues 24 to 411 (RTFTAKSFHT…VEERDFRPFS (388 aa)) lie on the Lumenal side of the membrane. N-linked (GlcNAc...) asparagine glycosylation is present at Asn56. 69–75 (TRSGSSF) is a binding site for 3'-phosphoadenylyl sulfate. N-linked (GlcNAc...) asparagine glycans are attached at residues Asn145 and Asn189. 234–242 (RDPRGILAS) contacts 3'-phosphoadenylyl sulfate. Asn334 carries an N-linked (GlcNAc...) asparagine glycan. The Cell attachment site motif lies at 337–339 (RGD).

Belongs to the sulfotransferase 1 family. Gal/GlcNAc/GalNAc subfamily. Widely expressed at low level. Expressed in brain and skeletal muscle. Expressed by high endothelial cells (HEVs) and leukocytes.

Its subcellular location is the golgi apparatus membrane. The enzyme catalyses 3'-phosphoadenylyl sulfate + keratan = adenosine 3',5'-bisphosphate + keratan 6'-sulfate.. It participates in glycan metabolism. Its function is as follows. Sulfotransferase that utilizes 3'-phospho-5'-adenylyl sulfate (PAPS) as sulfonate donor to catalyze the transfer of sulfate to position 6 of internal galactose (Gal) residues of keratan. Cooperates with B4GALT4 and B3GNT7 glycosyltransferases and CHST6 sulfotransferase to construct and elongate disulfated disaccharide unit [-&gt;3(6-sulfoGalbeta)1-&gt;4(6-sulfoGlcNAcbeta)1-&gt;] within keratan sulfate polymer. Has a preference for sulfating keratan sulfate, but it also transfers sulfate to the unsulfated polymer. Involved in biosynthesis of phosphacan, a major keratan sulfate proteoglycan in the developing brain. Involved in biosynthesis of 6-sulfoGalbeta-containing O-linked glycans in high endothelial venules of lymph nodes. May act in a synergistic manner with CHST4 to generate sialyl 6',6-disulfo Lewis X motif, a recognition determinant for immune cell receptors implicated in leukocyte trafficking. Catalyzes sulfation of N-acetyllactosamine (LacNAc) oligosaccharides with highest efficiency for sialylated LacNAc structures. This Homo sapiens (Human) protein is Carbohydrate sulfotransferase 1.